The chain runs to 690 residues: Choline transporter-like 1 (690 aa).

A helical transmembrane segment spans residues 23 to 43 (IFWLVLYVVFWIALIVIAVFS). Residue Asn-134 is glycosylated (N-linked (GlcNAc...) asparagine). Transmembrane regions (helical) follow at residues 203 to 223 (LYKAWPTIVLICALSLVFSIV), 237 to 259 (WLICIIVVVASVGITGVLWWSYY), 282 to 302 (ATIYVLAIAATCIMIILLVVI), and 334 to 354 (LLAFLALSVFLAFWVVVVVCL). Asn-391 carries an N-linked (GlcNAc...) asparagine glycan. A run of 4 helical transmembrane segments spans residues 415-435 (IYIIGLIWTSEFIFACQQLAI), 464-484 (LGSVAKGSLIITIFKIPRLIL), 565-585 (FVLFLGKLAVASICGLISILL), and 594-614 (FYMAPVIIITVFAFFIAHIIL).

This sequence belongs to the CTL (choline transporter-like) family.

The protein localises to the membrane. This is Choline transporter-like 1 from Anopheles gambiae (African malaria mosquito).